A 268-amino-acid chain; its full sequence is Fatty acid elongase sre1 (268 aa).

The next 7 helical transmembrane spans lie at 31–51, 62–82, 110–130, 137–157, 161–181, 198–218, and 227–247; these read VFPFSTSVIYVLVIFALQAIM, FSIIHNINLIILSFSMMSGVM, IGFWIYIFYLSKYYELVDTVI, PIIFLHIFHHMAMVPVTWQWL, WLVGSWWCTLVNSFIHVLMYY, ITKAQIVQFLTGTAMVSYWFV, and APLSPAIVSNTINSFFIILFG.

It belongs to the ELO family.

It localises to the membrane. The catalysed reaction is a very-long-chain acyl-CoA + malonyl-CoA + H(+) = a very-long-chain 3-oxoacyl-CoA + CO2 + CoA. Its function is as follows. Could be implicated in synthesis of very long chain fatty acids. This is Fatty acid elongase sre1 (sre1) from Dictyostelium discoideum (Social amoeba).